The following is a 218-amino-acid chain: Adenylate kinase (218 aa).

10–15 (GAGKGT) is an ATP binding site. Positions 30–59 (STGDMLRAAVKAGSPLGLKVKEVMATGGLV) are NMP. Residues Thr-31, Arg-36, 57 to 59 (GLV), 85 to 88 (GFPR), and Gln-92 contribute to the AMP site. The segment at 122–159 (GRRVHEASGRVYHVDYNPPKVEGKDDVTGEPLVQREDD) is LID. ATP contacts are provided by residues Arg-123 and 132 to 133 (VY). 2 residues coordinate AMP: Arg-156 and Arg-167. Gly-203 lines the ATP pocket.

It belongs to the adenylate kinase family. Monomer.

The protein localises to the cytoplasm. The catalysed reaction is AMP + ATP = 2 ADP. Its pathway is purine metabolism; AMP biosynthesis via salvage pathway; AMP from ADP: step 1/1. Functionally, catalyzes the reversible transfer of the terminal phosphate group between ATP and AMP. Plays an important role in cellular energy homeostasis and in adenine nucleotide metabolism. This Hahella chejuensis (strain KCTC 2396) protein is Adenylate kinase.